Consider the following 968-residue polypeptide: RNA polymerase-associated protein RapA (968 aa).

One can recognise a Helicase ATP-binding domain in the interval 164–334 (DVGRRHAPRV…FARLRLLDPN (171 aa)). 177-184 (DEVGLGKT) provides a ligand contact to ATP. The DEAH box signature appears at 280–283 (DEAH). One can recognise a Helicase C-terminal domain in the interval 490–662 (RVEWLMGYLT…YLASPDQTEG (173 aa)).

It belongs to the SNF2/RAD54 helicase family. RapA subfamily. In terms of assembly, interacts with the RNAP. Has a higher affinity for the core RNAP than for the holoenzyme. Its ATPase activity is stimulated by binding to RNAP.

Its function is as follows. Transcription regulator that activates transcription by stimulating RNA polymerase (RNAP) recycling in case of stress conditions such as supercoiled DNA or high salt concentrations. Probably acts by releasing the RNAP, when it is trapped or immobilized on tightly supercoiled DNA. Does not activate transcription on linear DNA. Probably not involved in DNA repair. The protein is RNA polymerase-associated protein RapA of Escherichia coli (strain 55989 / EAEC).